We begin with the raw amino-acid sequence, 738 residues long: Dipeptidyl peptidase 3 (738 aa).

Position 2 is an N-acetylalanine (Ala2). His450 contributes to the Zn(2+) binding site. Residue Glu451 is part of the active site. Residues His455 and Glu508 each contribute to the Zn(2+) site.

It belongs to the peptidase M49 family. Requires Zn(2+) as cofactor.

The protein resides in the cytoplasm. It carries out the reaction Release of an N-terminal dipeptide from a peptide comprising four or more residues, with broad specificity. Also acts on dipeptidyl 2-naphthylamides.. With respect to regulation, inhibited by spinorphin, an opioid peptide derived from hemoglobin. Cleaves and degrades bioactive peptides, including angiotensin, Leu-enkephalin and Met-enkephalin. Also cleaves Arg-Arg-beta-naphthylamide. The chain is Dipeptidyl peptidase 3 (Dpp3) from Rattus norvegicus (Rat).